A 244-amino-acid polypeptide reads, in one-letter code: Adenosylcobinamide-GDP ribazoletransferase (244 aa).

5 consecutive transmembrane segments (helical) span residues 31–51 (LLCYPLVGLLFGLLLWLASHL), 55–75 (APAPLHAALLLTLWVLLSGAL), 109–129 (IAVVTLVLVLLLKFCALWVLV), 133–153 (AGALLVLAPVVGRAAMLGLFL), and 188–208 (LLLGGWSAIWPMALALGVFLW).

This sequence belongs to the CobS family. Requires Mg(2+) as cofactor.

It localises to the cell inner membrane. The enzyme catalyses alpha-ribazole + adenosylcob(III)inamide-GDP = adenosylcob(III)alamin + GMP + H(+). It carries out the reaction alpha-ribazole 5'-phosphate + adenosylcob(III)inamide-GDP = adenosylcob(III)alamin 5'-phosphate + GMP + H(+). Its pathway is cofactor biosynthesis; adenosylcobalamin biosynthesis; adenosylcobalamin from cob(II)yrinate a,c-diamide: step 7/7. In terms of biological role, joins adenosylcobinamide-GDP and alpha-ribazole to generate adenosylcobalamin (Ado-cobalamin). Also synthesizes adenosylcobalamin 5'-phosphate from adenosylcobinamide-GDP and alpha-ribazole 5'-phosphate. In Pseudomonas putida (strain W619), this protein is Adenosylcobinamide-GDP ribazoletransferase.